Reading from the N-terminus, the 1701-residue chain is Coiled-coil domain-containing protein 180 (1701 aa).

The interval 1–35 (MRGGENRPPARVQSSSEELELRHQSLDAFPGRRLP) is disordered. Positions 171–198 (QRQAEHKRKSYESALASFQEEIAQVGKE) form a coiled coil. Disordered stretches follow at residues 657-808 (EKPS…DKEE), 1272-1291 (HHCD…CGSR), and 1319-1354 (GFKR…KPNK). The span at 661-671 (QKRVKKLRKKQ) shows a compositional bias: basic residues. Residues 672 to 682 (GSKEDMTRSEE) show a composition bias toward basic and acidic residues. The segment covering 683 to 692 (SISSGTSTAR) has biased composition (polar residues). Positions 696–705 (EVEEENDQEM) are enriched in acidic residues. Over residues 755–766 (ENVKGQGEKKEE) the composition is skewed to basic and acidic residues. Residues 757–804 (VKGQGEKKEESEEEDEKEEEEEEEKLEEEKEEKEAQEEQESLSVGEEE) adopt a coiled-coil conformation. A compositionally biased stretch (acidic residues) spans 767 to 808 (SEEEDEKEEEEEEEKLEEEKEEKEAQEEQESLSVGEEEDKEE).

The protein is Coiled-coil domain-containing protein 180 (CCDC180) of Homo sapiens (Human).